Reading from the N-terminus, the 347-residue chain is NADH-ubiquinone oxidoreductase chain 2 (347 aa).

A run of 10 helical transmembrane segments spans residues 1-21 (MNPL…TIVM), 25-45 (HWLV…PVLM), 59-79 (YFLT…INLI), 96-116 (IIMT…FWVP), 122-142 (IQLS…ISIL), 150-170 (NLNL…WGGL), 201-221 (ALLN…VFML), 242-262 (TALL…GFLP), 274-294 (NSVI…YFYM), and 326-346 (LSPL…LTLL).

It belongs to the complex I subunit 2 family. As to quaternary structure, core subunit of respiratory chain NADH dehydrogenase (Complex I) which is composed of 45 different subunits. Interacts with TMEM242.

The protein localises to the mitochondrion inner membrane. It catalyses the reaction a ubiquinone + NADH + 5 H(+)(in) = a ubiquinol + NAD(+) + 4 H(+)(out). Its function is as follows. Core subunit of the mitochondrial membrane respiratory chain NADH dehydrogenase (Complex I) which catalyzes electron transfer from NADH through the respiratory chain, using ubiquinone as an electron acceptor. Essential for the catalytic activity and assembly of complex I. The polypeptide is NADH-ubiquinone oxidoreductase chain 2 (Eidolon helvum (Straw-colored fruit bat)).